Consider the following 1372-residue polypeptide: DNA-directed RNA polymerase subunit beta' (1372 aa).

Zn(2+) contacts are provided by Cys69, Cys71, Cys84, and Cys87. 3 residues coordinate Mg(2+): Asp460, Asp462, and Asp464. Residues Cys808, Cys882, Cys889, and Cys892 each coordinate Zn(2+).

Belongs to the RNA polymerase beta' chain family. The RNAP catalytic core consists of 2 alpha, 1 beta, 1 beta' and 1 omega subunit. When a sigma factor is associated with the core the holoenzyme is formed, which can initiate transcription. It depends on Mg(2+) as a cofactor. Zn(2+) is required as a cofactor.

It catalyses the reaction RNA(n) + a ribonucleoside 5'-triphosphate = RNA(n+1) + diphosphate. Its function is as follows. DNA-dependent RNA polymerase catalyzes the transcription of DNA into RNA using the four ribonucleoside triphosphates as substrates. This is DNA-directed RNA polymerase subunit beta' from Rickettsia prowazekii (strain Madrid E).